The sequence spans 628 residues: DNA mismatch repair protein MutL (628 aa).

The tract at residues 332–416 (PTSAMPAPGN…ASTAPPLSEE (85 aa)) is disordered. A compositionally biased stretch (polar residues) spans 375–396 (EGSSRSDVPYPSASQVTETTDS).

It belongs to the DNA mismatch repair MutL/HexB family.

In terms of biological role, this protein is involved in the repair of mismatches in DNA. It is required for dam-dependent methyl-directed DNA mismatch repair. May act as a 'molecular matchmaker', a protein that promotes the formation of a stable complex between two or more DNA-binding proteins in an ATP-dependent manner without itself being part of a final effector complex. This Syntrophotalea carbinolica (strain DSM 2380 / NBRC 103641 / GraBd1) (Pelobacter carbinolicus) protein is DNA mismatch repair protein MutL.